Consider the following 216-residue polypeptide: Sarcospan (216 aa).

Topologically, residues 1–26 (MGRKPSPRAQELPEEEARTCCGCRFP) are cytoplasmic. The chain crosses the membrane as a helical span at residues 27 to 47 (LLLALLQLALGIAVTVLGFLM). Over 48–59 (ASISPSLLVRDT) the chain is Extracellular. A helical membrane pass occupies residues 60–80 (PFWAGSIVCVVAYLGLFMLCV). Topologically, residues 81–95 (SYQVDERTCVQFSMK) are cytoplasmic. A helical transmembrane segment spans residues 96-116 (VFYFLLSALGLMVCMLAVAFA). The Extracellular portion of the chain corresponds to 117 to 166 (AHHYSLLAQFTCETSLDSCQCKLPSSEPLSRAFVYRDVTDCTSVTGTFKL). The chain crosses the membrane as a helical span at residues 167-187 (FLIIQMVLNLVCGLVCLLACF). The Cytoplasmic portion of the chain corresponds to 188–216 (VMWKHRYQVFYVGVGLRSLMASDGQLPKA).

The protein resides in the cell membrane. It localises to the sarcolemma. It is found in the postsynaptic cell membrane. Functionally, component of the dystrophin-glycoprotein complex (DGC), a complex that spans the muscle plasma membrane and forms a link between the F-actin cytoskeleton and the extracellular matrix. Preferentially associates with the sarcoglycan subcomplex of the DGC. This chain is Sarcospan (Sspn), found in Mus musculus (Mouse).